The primary structure comprises 228 residues: Translation initiation factor 6 (228 aa).

It belongs to the eIF-6 family.

Functionally, binds to the 50S ribosomal subunit and prevents its association with the 30S ribosomal subunit to form the 70S initiation complex. The sequence is that of Translation initiation factor 6 from Thermococcus onnurineus (strain NA1).